A 328-amino-acid polypeptide reads, in one-letter code: 3-dehydroquinate synthase (328 aa).

The protein belongs to the archaeal-type DHQ synthase family.

It catalyses the reaction 2-amino-2,3,7-trideoxy-D-lyxo-hept-6-ulosonate + NAD(+) + H2O = 3-dehydroquinate + NH4(+) + NADH + H(+). Catalyzes the oxidative deamination and cyclization of 2-amino-3,7-dideoxy-D-threo-hept-6-ulosonic acid (ADH) to yield 3-dehydroquinate (DHQ), which is fed into the canonical shikimic pathway of aromatic amino acid biosynthesis. This is 3-dehydroquinate synthase from Methanoculleus marisnigri (strain ATCC 35101 / DSM 1498 / JR1).